We begin with the raw amino-acid sequence, 194 residues long: Probable proteasome subunit beta type-4 (194 aa).

Belongs to the peptidase T1B family. In terms of assembly, the 26S proteasome consists of a 20S proteasome core and two 19S regulatory subunits. The 20S proteasome core is composed of 28 subunits that are arranged in four stacked rings, resulting in a barrel-shaped structure. The two end rings are each formed by seven alpha subunits, and the two central rings are each formed by seven beta subunits. The catalytic chamber with the active sites is on the inside of the barrel.

It is found in the cytoplasm. The protein localises to the nucleus. Non-catalytic component of the proteasome, a multicatalytic proteinase complex which is characterized by its ability to cleave peptides with Arg, Phe, Tyr, Leu, and Glu adjacent to the leaving group at neutral or slightly basic pH. The proteasome has an ATP-dependent proteolytic activity. This is Probable proteasome subunit beta type-4 (PRO2) from Meyerozyma guilliermondii (strain ATCC 6260 / CBS 566 / DSM 6381 / JCM 1539 / NBRC 10279 / NRRL Y-324) (Yeast).